Reading from the N-terminus, the 240-residue chain is Pyridoxine 5'-phosphate synthase (240 aa).

3-amino-2-oxopropyl phosphate is bound at residue asparagine 7. Position 9 to 10 (9 to 10 (DH)) interacts with 1-deoxy-D-xylulose 5-phosphate. Position 18 (arginine 18) interacts with 3-amino-2-oxopropyl phosphate. The active-site Proton acceptor is the histidine 43. Residues arginine 45 and histidine 50 each contribute to the 1-deoxy-D-xylulose 5-phosphate site. The Proton acceptor role is filled by glutamate 70. Position 100 (threonine 100) interacts with 1-deoxy-D-xylulose 5-phosphate. Residue histidine 191 is the Proton donor of the active site. Residues glycine 192 and 213–214 (GH) each bind 3-amino-2-oxopropyl phosphate.

This sequence belongs to the PNP synthase family. As to quaternary structure, homooctamer; tetramer of dimers.

Its subcellular location is the cytoplasm. The catalysed reaction is 3-amino-2-oxopropyl phosphate + 1-deoxy-D-xylulose 5-phosphate = pyridoxine 5'-phosphate + phosphate + 2 H2O + H(+). Its pathway is cofactor biosynthesis; pyridoxine 5'-phosphate biosynthesis; pyridoxine 5'-phosphate from D-erythrose 4-phosphate: step 5/5. Catalyzes the complicated ring closure reaction between the two acyclic compounds 1-deoxy-D-xylulose-5-phosphate (DXP) and 3-amino-2-oxopropyl phosphate (1-amino-acetone-3-phosphate or AAP) to form pyridoxine 5'-phosphate (PNP) and inorganic phosphate. This chain is Pyridoxine 5'-phosphate synthase, found in Gloeothece citriformis (strain PCC 7424) (Cyanothece sp. (strain PCC 7424)).